Reading from the N-terminus, the 149-residue chain is Small ribosomal subunit protein uS15 (149 aa).

Residues 1-11 (MARMHSRDRGK) show a composition bias toward basic and acidic residues. The segment at 1 to 25 (MARMHSRDRGKSGSTRPPRVAPPSW) is disordered.

It belongs to the universal ribosomal protein uS15 family. As to quaternary structure, part of the 30S ribosomal subunit.

This is Small ribosomal subunit protein uS15 from Methanopyrus kandleri (strain AV19 / DSM 6324 / JCM 9639 / NBRC 100938).